The chain runs to 325 residues: Secreted frizzled-related protein 3 (325 aa).

The signal sequence occupies residues 1-32 (MVCGSPGGMLLLRAGLLALAALCLLRVPGARA). The 118-residue stretch at 33–150 (AACEPVRIPL…VYDRGVCISP (118 aa)) folds into the FZ domain. 5 disulfide bridges follow: Cys-35-Cys-96, Cys-43-Cys-89, Cys-80-Cys-119, Cys-108-Cys-147, and Cys-112-Cys-136. Asn-49 carries an N-linked (GlcNAc...) asparagine glycan. An NTR domain is found at 178–298 (CKCKPIRATQ…WDMKLRHLGL (121 aa)). A disordered region spans residues 297–325 (GLSKSDSSNSDSTQSQKSGRNSNPRQARN). The span at 299-314 (SKSDSSNSDSTQSQKS) shows a compositional bias: low complexity. Over residues 315 to 325 (GRNSNPRQARN) the composition is skewed to polar residues.

Belongs to the secreted frizzled-related protein (sFRP) family. As to quaternary structure, interacts with MYOC. As to expression, expressed primarily in the cartilaginous cores of the long bone during embryonic and fetal development and in the appendicular skeleton (6-13 weeks). At 13 weeks of gestation, transcripts were present in early chondroblasts of the tarsal bones of the foot, the carpal bones of the hands and the epiphysis of long bones. Highly expressed in placenta and heart, followed by brain, skeletal muscle, kidney and pancreas. Weakly expressed in lung and liver.

It is found in the secreted. In terms of biological role, soluble frizzled-related proteins (sFRPS) function as modulators of Wnt signaling through direct interaction with Wnts. They have a role in regulating cell growth and differentiation in specific cell types. SFRP3/FRZB appears to be involved in limb skeletogenesis. Antagonist of Wnt8 signaling. Regulates chondrocyte maturation and long bone development. In Homo sapiens (Human), this protein is Secreted frizzled-related protein 3 (FRZB).